Consider the following 476-residue polypeptide: 3-isopropylmalate dehydratase large subunit (476 aa).

Residues C357, C417, and C420 each coordinate [4Fe-4S] cluster.

It belongs to the aconitase/IPM isomerase family. LeuC type 1 subfamily. Heterodimer of LeuC and LeuD. It depends on [4Fe-4S] cluster as a cofactor.

The enzyme catalyses (2R,3S)-3-isopropylmalate = (2S)-2-isopropylmalate. It functions in the pathway amino-acid biosynthesis; L-leucine biosynthesis; L-leucine from 3-methyl-2-oxobutanoate: step 2/4. Functionally, catalyzes the isomerization between 2-isopropylmalate and 3-isopropylmalate, via the formation of 2-isopropylmaleate. This is 3-isopropylmalate dehydratase large subunit from Mycobacterium leprae (strain TN).